We begin with the raw amino-acid sequence, 814 residues long: G-type lectin S-receptor-like serine/threonine-protein kinase At1g61400 (814 aa).

An N-terminal signal peptide occupies residues 1 to 34; sequence MDFLFLLLERKNKHMGKKRVVLLWLSIFISFSSA. Residues 35–154 form the Bulb-type lectin domain; the sequence is EITEESPLSI…VSGRTLWESF (120 aa). The Extracellular segment spans residues 35 to 436; the sequence is EITEESPLSI…ELDVNKRKKT (402 aa). 4 N-linked (GlcNAc...) asparagine glycosylation sites follow: N63, N104, N127, and N246. The region spanning 288 to 324 is the EGF-like; atypical domain; sequence PANSCDIYGVCGPFGFCVISVPPKCKCFKGFIPKSIE. 2 disulfide bridges follow: C292–C304 and C298–C312. Residues N330, N346, and N385 are each glycosylated (N-linked (GlcNAc...) asparagine). The 83-residue stretch at 343 to 425 folds into the PAN domain; it reads CQGNSTGKDA…GELLSIRLAR (83 aa). Intrachain disulfides connect C378–C399 and C382–C388. The helical transmembrane segment at 437 to 457 threads the bilayer; the sequence is IIAITVSLTLFVILGFTAFGF. Residues 458-814 are Cytoplasmic-facing; that stretch reads WRRRVEQNAL…EMTESVIHGR (357 aa). The Protein kinase domain maps to 500-785; the sequence is FSLSNKLGHG…DLPLPKQPTF (286 aa). ATP contacts are provided by residues 506 to 514 and K528; that span reads LGHGGFGSV. Phosphoserine is present on residues S534 and S549. Positions 589–606 are caM-binding; sequence KKRLEIDWPKRFDIIQGI. The active-site Proton acceptor is D625. A phosphoserine mark is found at S629 and S642. A Phosphothreonine modification is found at T659. Residues S702 and S796 each carry the phosphoserine modification.

Belongs to the protein kinase superfamily. Ser/Thr protein kinase family.

The protein localises to the cell membrane. The enzyme catalyses L-seryl-[protein] + ATP = O-phospho-L-seryl-[protein] + ADP + H(+). The catalysed reaction is L-threonyl-[protein] + ATP = O-phospho-L-threonyl-[protein] + ADP + H(+). The sequence is that of G-type lectin S-receptor-like serine/threonine-protein kinase At1g61400 from Arabidopsis thaliana (Mouse-ear cress).